The primary structure comprises 825 residues: MAAAAFEVPAALTTSESTMAAERAAAPVQAVEPTPASPWTQRTAHDIGGPRTRTGDVVLAEPADFESLLLSRPVLEGLRAAGFERPSPVQLKAIPLGRCGLDLIVQAKSGTGKTCVFSTIALDSLILENYSTQILILAPTREIAVQIHSVITAIGIKMEGLECHVFIGGTPLSQDKTRLKKCHIAVGSPGRIKQLIELDYLNPGSIRLFILDEADKLLEEGSFQEQINWIYSSLPASKQMLAVSATYPEVLANALTRYMRDPTFVRLNPSDPSLIGLKQYYQVVNSYPLAHKIFEEKTQHLQELFSKVPFNQALVFSNLHSRAQHLADILSSKGFPTECISGNMNQNQRLDAMAKLKQFHCRVLISTDLTSRGIDAEKVNLVVNLDVPLDWETYMHRIGRAGRFGTLGLTVTYCCRGEEENMMMKIAQKCNINLLPLPDPIPPGLMEECLNWDVEVKAAMHTYSSPTVATQSPKKQVQKLERAFQSQRTPGNQTPSPRNTSASALSARPKHSKPKLPVKSHSECGVLEKAAPPQESGCPAQLEEQVKNSVQTSVEDSSSNSQHQAKDSSPGSLPKIPCLSSFKVHQPSTLTFAELVDDYEHYIKEGLEKPVEIIRHYTGPEAQTGNPQNGFVRNRVSEDRAQMLVSSSQSGDSESDSDSCSSRTSSQSKGNKSYLEGSSDTQLKDTECTPVGGPLSLEQVQNGNDTPTQVEYQEAPETQVKARHKEGANQRSKQSRRNPARRSSYRVQSEPQEESWYDCHRETTASFSDTYQDYEEYWRAYYRAWQEYYAAASHSYYWNAQRHPSWMAAYHMNTVYLQEMMRGNQ.

The segment at 27–50 (PVQAVEPTPASPWTQRTAHDIGGP) is disordered. Residues 63–91 (ADFESLLLSRPVLEGLRAAGFERPSPVQL) carry the Q motif motif. ATP contacts are provided by residues Arg85, Gln90, 107-114 (AKSGTGKT), and 110-115 (GTGKTC). One can recognise a Helicase ATP-binding domain in the interval 94 to 265 (IPLGRCGLDL…TRYMRDPTFV (172 aa)). The residue at position 188 (Ser188) is a Phosphoserine. The DEAD box signature appears at 212 to 215 (DEAD). A Phosphoserine modification is found at Ser270. The Helicase C-terminal domain maps to 300–449 (HLQELFSKVP…PIPPGLMEEC (150 aa)). 2 stretches are compositionally biased toward polar residues: residues 465 to 475 (SPTVATQSPKK) and 484 to 504 (FQSQRTPGNQTPSPRNTSASA). 2 disordered regions span residues 465 to 573 (SPTV…PGSL) and 642 to 753 (QMLV…EPQE). 3 positions are modified to phosphoserine: Ser472, Ser501, and Ser506. The span at 508–518 (RPKHSKPKLPV) shows a compositional bias: basic residues. The span at 547 to 571 (KNSVQTSVEDSSSNSQHQAKDSSPG) shows a compositional bias: polar residues. Thr552 carries the post-translational modification Phosphothreonine. 7 positions are modified to phosphoserine: Ser561, Ser653, Ser655, Ser657, Ser673, Ser678, and Ser679. Residues 646–668 (SSSQSGDSESDSDSCSSRTSSQS) are compositionally biased toward low complexity. Residues Thr689 and Thr706 each carry the phosphothreonine modification. Positions 698–711 (EQVQNGNDTPTQVE) are enriched in polar residues. Residues 733–744 (KQSRRNPARRSS) show a composition bias toward basic residues.

Belongs to the DEAD box helicase family. DDX20 subfamily. Part of the core SMN complex that contains SMN1, GEMIN2/SIP1, DDX20/GEMIN3, GEMIN4, GEMIN5, GEMIN6, GEMIN7, GEMIN8 and STRAP/UNRIP. Part of the SMN-Sm complex that contains SMN1, GEMIN2/SIP1, DDX20/GEMIN3, GEMIN4, GEMIN5, GEMIN6, GEMIN7, GEMIN8, STRAP/UNRIP and the Sm proteins SNRPB, SNRPD1, SNRPD2, SNRPD3, SNRPE, SNRPF and SNRPG. Interacts with SMN1; the interaction is direct. Interacts with GEMIN4; the interaction is direct. Interacts with GEMIN5. Interacts with SNUPN; the interaction is direct. Interacts with PPP4R2. Interacts with FOXL2. Interacts with NANOS1 and PUM2.

It is found in the cytoplasm. Its subcellular location is the nucleus. The protein localises to the gem. The catalysed reaction is ATP + H2O = ADP + phosphate + H(+). The enzyme catalyses a ribonucleoside 5'-triphosphate + H2O = a ribonucleoside 5'-diphosphate + phosphate + H(+). In terms of biological role, the SMN complex catalyzes the assembly of small nuclear ribonucleoproteins (snRNPs), the building blocks of the spliceosome, and thereby plays an important role in the splicing of cellular pre-mRNAs. Most spliceosomal snRNPs contain a common set of Sm proteins SNRPB, SNRPD1, SNRPD2, SNRPD3, SNRPE, SNRPF and SNRPG that assemble in a heptameric protein ring on the Sm site of the small nuclear RNA to form the core snRNP (Sm core). In the cytosol, the Sm proteins SNRPD1, SNRPD2, SNRPE, SNRPF and SNRPG are trapped in an inactive 6S pICln-Sm complex by the chaperone CLNS1A that controls the assembly of the core snRNP. To assemble core snRNPs, the SMN complex accepts the trapped 5Sm proteins from CLNS1A forming an intermediate. Binding of snRNA inside 5Sm triggers eviction of the SMN complex, thereby allowing binding of SNRPD3 and SNRPB to complete assembly of the core snRNP. May also play a role in the metabolism of small nucleolar ribonucleoprotein (snoRNPs). This is Probable ATP-dependent RNA helicase DDX20 (Ddx20) from Mus musculus (Mouse).